An 805-amino-acid polypeptide reads, in one-letter code: STEYIRGINEGRVSSMESVCSEHSPCEHGNIECECIFCWEHDAQCKSRRRELDLGEPTGSERGMANNYEQSRNEDLYCTETVPSSAALQANTITERDIREDFTDQTVDNIYPQLHSGSRASEQLEFAFPTIGTRSWEILIRQSYEHLKPDYKEEDFQSHIRRVRRQLFPEKTMDNNGSQASTTQMLRDDIERCGIESIADSASEDNGDGVDGTCISTVDIQGNCIVNAHGNEQATGSKTRKIRATTTPESSESKKHKGSNNQQNIQEQSSTTAIADGHDIVDGELDGRSESNRETAYYTFVLHKNNCKEDWRYIATTRAKQAPSFITFDHGDHIHILFSSSNTGGNSTRVRTRITKFLSATSAGNAEATITFSKVKFLRNYILYCIRYGIETVNIYGNKIQQQLTEAMDTFKVLFENRDPNDVILDAGCKLYHEEKKEYQQKRCGQRKQQNLTDIILDKIKEKKITTAQQWENIIEPEFKIQLMKEFGLNVDSYVQRIVRIERTRIQQIIKSKTLTEIMVEILNEEYIKNFTPGEDNSKLQNIIQWIEYMFKENNINIIHFLAWNEIIKPKRYKKINGMVLEGITNAGKSLILDNLLAMVKPEEIPRERDNSGFHLDQLPGAGSVLFEEPMITPVNVGTWKLLLEGKTIKTDVKNKDKEPIERTPTWITTATPITNNVHMNETSQILQRIKLYIFKKSIQHREDKYTINAQIQNKLISRPPGLVEPIHMAIVFVKNFKEIYKLIEEEDNAHTVNEKAIRLSEEAKQEAEEWQTALQWNTMEEEQKENEKQTEDQDKESEKETATQ.

The region spanning 151–425 (YKEEDFQSHI…ENRDPNDVIL (275 aa)) is the PV NS1-Nuc domain. The segment at 231 to 276 (NEQATGSKTRKIRATTTPESSESKKHKGSNNQQNIQEQSSTTAIAD) is disordered. The span at 259–270 (SNNQQNIQEQSS) shows a compositional bias: low complexity. A divalent metal cation-binding residues include D329, H333, and H335. An RCR-2 motif is present at residues 333–335 (HIH). Residue Y381 is the For nuclease activity of the active site. Residues 553–708 (ENNINIIHFL…IQHREDKYTI (156 aa)) enclose the SF3 helicase domain. Residue 583 to 590 (GITNAGKS) coordinates ATP. The tract at residues 776–805 (QWNTMEEEQKENEKQTEDQDKESEKETATQ) is disordered. Over residues 786–805 (ENEKQTEDQDKESEKETATQ) the composition is skewed to basic and acidic residues.

It belongs to the parvoviruses initiator protein NS1 family. In terms of assembly, homooligomer. It depends on Mg(2+) as a cofactor.

Its subcellular location is the host nucleus. The enzyme catalyses ATP + H2O = ADP + phosphate + H(+). Functionally, multifunctional protein which displays endonuclease and helicase activities required for initiating and directing viral DNA replication. Also plays a role in viral packaging and transactivation of several promoters. Binds site-specifically to 2-3 approximate tandem copies within the origins of replication (Ori), unwinds this hairpin region and nicks one DNA strand thereby initiating the rolling circle replication (RCR). The sequence is that of Initiator protein NS1 (NS1) from Aedes albopictus (Asian tiger mosquito).